A 277-amino-acid chain; its full sequence is Phosphatidylglycerol--prolipoprotein diacylglyceryl transferase (277 aa).

The next 7 membrane-spanning stretches (helical) occupy residues 21 to 41 (LAVR…LWLA), 60 to 80 (LLFA…VLFY), 95 to 115 (VWTG…AMLW), 124 to 144 (FFTI…AGRL), 176 to 196 (SQLY…NWFI), 203 to 223 (GTVS…VEYV), and 239 to 259 (MGQI…LWAF). Arginine 143 lines the a 1,2-diacyl-sn-glycero-3-phospho-(1'-sn-glycerol) pocket.

Belongs to the Lgt family.

It is found in the cell inner membrane. The catalysed reaction is L-cysteinyl-[prolipoprotein] + a 1,2-diacyl-sn-glycero-3-phospho-(1'-sn-glycerol) = an S-1,2-diacyl-sn-glyceryl-L-cysteinyl-[prolipoprotein] + sn-glycerol 1-phosphate + H(+). It participates in protein modification; lipoprotein biosynthesis (diacylglyceryl transfer). Functionally, catalyzes the transfer of the diacylglyceryl group from phosphatidylglycerol to the sulfhydryl group of the N-terminal cysteine of a prolipoprotein, the first step in the formation of mature lipoproteins. The protein is Phosphatidylglycerol--prolipoprotein diacylglyceryl transferase of Aliivibrio fischeri (strain ATCC 700601 / ES114) (Vibrio fischeri).